The following is a 760-amino-acid chain: DNA-directed RNA polymerase subunit beta' (760 aa).

The Zn(2+) site is built by Cys-76, Cys-78, Cys-90, and Cys-93. The Mg(2+) site is built by Asp-594, Asp-596, and Asp-598.

It belongs to the RNA polymerase beta' chain family. RpoC1 subfamily. As to quaternary structure, in plastids the minimal PEP RNA polymerase catalytic core is composed of four subunits: alpha, beta, beta', and beta''. When a (nuclear-encoded) sigma factor is associated with the core the holoenzyme is formed, which can initiate transcription. It depends on Mg(2+) as a cofactor. Requires Zn(2+) as cofactor.

The protein resides in the plastid. The protein localises to the chloroplast. It carries out the reaction RNA(n) + a ribonucleoside 5'-triphosphate = RNA(n+1) + diphosphate. DNA-dependent RNA polymerase catalyzes the transcription of DNA into RNA using the four ribonucleoside triphosphates as substrates. This is DNA-directed RNA polymerase subunit beta' from Bigelowiella natans (Pedinomonas minutissima).